Consider the following 400-residue polypeptide: Carnosine N-methyltransferase (400 aa).

The tract at residues 1-49 (MQRRRRAPPASQPAQDSGHSEEVEVQFSAGRLGSAAPAGPPVRGTAEDE) is disordered. Positions 155, 158, 199, 220, 286, 287, and 303 each coordinate S-adenosyl-L-methionine. Residue Asp307 participates in carnosine binding. Residue Tyr315 participates in S-adenosyl-L-methionine binding. 2 residues coordinate carnosine: His338 and Tyr389.

The protein belongs to the carnosine N-methyltransferase family. In terms of assembly, homodimer. Each monomer accommodates one molecule of carnosine in its active pocket, precisely anchoring the histidine imidazole ring such that only N1 is exposed and deprotonated for methylation. As to expression, expressed at higher level in skeletal muscle compared to other tissues.

It is found in the cytoplasm. The protein resides in the cytosol. The protein localises to the nucleus. The enzyme catalyses carnosine + S-adenosyl-L-methionine = anserine + S-adenosyl-L-homocysteine + H(+). Its function is as follows. N-methyltransferase that catalyzes the formation of anserine (beta-alanyl-N(Pi)-methyl-L-histidine) from carnosine. Anserine, a methylated derivative of carnosine (beta-alanyl-L-histidine), is an abundant constituent of vertebrate skeletal muscles. Also methylates other L-histidine-containing di- and tripeptides such as Gly-Gly-His, Gly-His and homocarnosine (GABA-His). The chain is Carnosine N-methyltransferase from Rattus norvegicus (Rat).